A 104-amino-acid polypeptide reads, in one-letter code: DNA-directed RNA polymerase subunit omega (104 aa).

The segment at 53 to 104 (EIESGNVTIHPDPEGKREAVRRRIEEEKRRKEEEEKKIKEQIAKEKEDGEKI) is disordered. Basic and acidic residues predominate over residues 63 to 104 (PDPEGKREAVRRRIEEEKRRKEEEEKKIKEQIAKEKEDGEKI).

The protein belongs to the RNA polymerase subunit omega family. The RNAP catalytic core consists of 2 alpha, 1 beta, 1 beta' and 1 omega subunit. When a sigma factor is associated with the core the holoenzyme is formed, which can initiate transcription.

The catalysed reaction is RNA(n) + a ribonucleoside 5'-triphosphate = RNA(n+1) + diphosphate. Its function is as follows. Promotes RNA polymerase assembly. Latches the N- and C-terminal regions of the beta' subunit thereby facilitating its interaction with the beta and alpha subunits. The chain is DNA-directed RNA polymerase subunit omega from Streptococcus pneumoniae serotype 2 (strain D39 / NCTC 7466).